We begin with the raw amino-acid sequence, 233 residues long: Orotidine 5'-phosphate decarboxylase (233 aa).

Residues D12, K34, D61–T70, T120, R181, Q190, G210, and R211 each bind substrate. K63 (proton donor) is an active-site residue.

It belongs to the OMP decarboxylase family. Type 1 subfamily. Homodimer.

The catalysed reaction is orotidine 5'-phosphate + H(+) = UMP + CO2. It functions in the pathway pyrimidine metabolism; UMP biosynthesis via de novo pathway; UMP from orotate: step 2/2. Functionally, catalyzes the decarboxylation of orotidine 5'-monophosphate (OMP) to uridine 5'-monophosphate (UMP). In Hahella chejuensis (strain KCTC 2396), this protein is Orotidine 5'-phosphate decarboxylase.